The primary structure comprises 134 residues: Ribosome-binding factor A (134 aa).

The protein belongs to the RbfA family. As to quaternary structure, monomer. Binds 30S ribosomal subunits, but not 50S ribosomal subunits or 70S ribosomes.

The protein localises to the cytoplasm. One of several proteins that assist in the late maturation steps of the functional core of the 30S ribosomal subunit. Associates with free 30S ribosomal subunits (but not with 30S subunits that are part of 70S ribosomes or polysomes). Required for efficient processing of 16S rRNA. May interact with the 5'-terminal helix region of 16S rRNA. The polypeptide is Ribosome-binding factor A (Rhizobium etli (strain CIAT 652)).